We begin with the raw amino-acid sequence, 200 residues long: Probable nicotinate-nucleotide adenylyltransferase (200 aa).

The protein belongs to the NadD family.

It carries out the reaction nicotinate beta-D-ribonucleotide + ATP + H(+) = deamido-NAD(+) + diphosphate. It participates in cofactor biosynthesis; NAD(+) biosynthesis; deamido-NAD(+) from nicotinate D-ribonucleotide: step 1/1. Catalyzes the reversible adenylation of nicotinate mononucleotide (NaMN) to nicotinic acid adenine dinucleotide (NaAD). The protein is Probable nicotinate-nucleotide adenylyltransferase of Clostridium acetobutylicum (strain ATCC 824 / DSM 792 / JCM 1419 / IAM 19013 / LMG 5710 / NBRC 13948 / NRRL B-527 / VKM B-1787 / 2291 / W).